We begin with the raw amino-acid sequence, 312 residues long: Very-long-chain 3-oxoacyl-CoA reductase (312 aa).

A helical transmembrane segment spans residues 4–24 (ALPAAGFLYWVGASTVAYLAL). 50–79 (GEWAVVTGGTDGIGKSYAEELAKRGMKIVL) is an NADP(+) binding site. Transmembrane regions (helical) follow at residues 182–202 (GAIL…LTIY) and 271–291 (GYPI…WLYF). Serine 189 contacts substrate. The active-site Proton acceptor is tyrosine 202. The short motif at 308–312 (KMKMN) is the Di-lysine motif element.

Belongs to the short-chain dehydrogenases/reductases (SDR) family. 17-beta-HSD 3 subfamily.

The protein localises to the endoplasmic reticulum membrane. It catalyses the reaction a very-long-chain (3R)-3-hydroxyacyl-CoA + NADP(+) = a very-long-chain 3-oxoacyl-CoA + NADPH + H(+). It carries out the reaction 17beta-estradiol + NAD(+) = estrone + NADH + H(+). The catalysed reaction is 17beta-estradiol + NADP(+) = estrone + NADPH + H(+). The enzyme catalyses 3-oxooctadecanoyl-CoA + NADPH + H(+) = (3R)-hydroxyoctadecanoyl-CoA + NADP(+). It catalyses the reaction (7Z,10Z,13Z,16Z)-3-oxodocosatetraenoyl-CoA + NADPH + H(+) = (3R)-hydroxy-(7Z,10Z,13Z,16Z)-docosatetraenoyl-CoA + NADP(+). It carries out the reaction 3-oxo-(7Z,10Z,13Z,16Z,19Z)-docosapentaenoyl-CoA + NADPH + H(+) = (3R)-hydroxy-(7Z,10Z,13Z,16Z,19Z)-docosapentaenoyl-CoA + NADP(+). The catalysed reaction is (8Z,11Z,14Z)-3-oxoeicosatrienoyl-CoA + NADPH + H(+) = (3R)-hydroxy-(8Z,11Z,14Z)-eicosatrienoyl-CoA + NADP(+). The protein operates within lipid metabolism; fatty acid biosynthesis. Its pathway is steroid biosynthesis; estrogen biosynthesis. In terms of biological role, catalyzes the second of the four reactions of the long-chain fatty acids elongation cycle. This endoplasmic reticulum-bound enzymatic process, allows the addition of two carbons to the chain of long- and very long-chain fatty acids/VLCFAs per cycle. This enzyme has a 3-ketoacyl-CoA reductase activity, reducing 3-ketoacyl-CoA to 3-hydroxyacyl-CoA, within each cycle of fatty acid elongation. Thereby, it may participate in the production of VLCFAs of different chain lengths that are involved in multiple biological processes as precursors of membrane lipids and lipid mediators. May also catalyze the transformation of estrone (E1) into estradiol (E2) and play a role in estrogen formation. This Bos taurus (Bovine) protein is Very-long-chain 3-oxoacyl-CoA reductase (HSD17B12).